A 160-amino-acid polypeptide reads, in one-letter code: Allophycocyanin alpha chain (160 aa).

N70 bears the N4-methylasparagine mark. Residue C80 participates in (2R,3E)-phycocyanobilin binding.

It belongs to the phycobiliprotein family. In terms of assembly, component of the phycobilisome. Heterodimer of an alpha and a beta chain. In terms of processing, contains one covalently linked phycocyanobilin chromophore.

It localises to the cellular thylakoid membrane. Functionally, light-harvesting photosynthetic bile pigment-protein from the phycobiliprotein complex. Allophycocyanin has a maximum absorption at approximately 650 nanometers. The protein is Allophycocyanin alpha chain (apcA) of Anabaena cylindrica.